The primary structure comprises 95 residues: Small ribosomal subunit protein bS20 (95 aa).

Disordered stretches follow at residues 1–26 and 76–95; these read MALRHKSAQKRHRQSLKRRLINRSRK and KSRLAKALNKAKAAQAAQPA. Residues 80 to 95 are compositionally biased toward low complexity; sequence AKALNKAKAAQAAQPA.

It belongs to the bacterial ribosomal protein bS20 family.

Functionally, binds directly to 16S ribosomal RNA. This Deinococcus geothermalis (strain DSM 11300 / CIP 105573 / AG-3a) protein is Small ribosomal subunit protein bS20.